A 233-amino-acid polypeptide reads, in one-letter code: Methylthioribulose-1-phosphate dehydratase (233 aa).

Cysteine 91 provides a ligand contact to substrate. Zn(2+)-binding residues include histidine 108 and histidine 110. Glutamate 137 (proton donor/acceptor) is an active-site residue. Histidine 194 provides a ligand contact to Zn(2+).

This sequence belongs to the aldolase class II family. MtnB subfamily. It depends on Zn(2+) as a cofactor.

The protein localises to the cytoplasm. The enzyme catalyses 5-(methylsulfanyl)-D-ribulose 1-phosphate = 5-methylsulfanyl-2,3-dioxopentyl phosphate + H2O. The protein operates within amino-acid biosynthesis; L-methionine biosynthesis via salvage pathway; L-methionine from S-methyl-5-thio-alpha-D-ribose 1-phosphate: step 2/6. In terms of biological role, catalyzes the dehydration of methylthioribulose-1-phosphate (MTRu-1-P) into 2,3-diketo-5-methylthiopentyl-1-phosphate (DK-MTP-1-P). This Phaeosphaeria nodorum (strain SN15 / ATCC MYA-4574 / FGSC 10173) (Glume blotch fungus) protein is Methylthioribulose-1-phosphate dehydratase.